Here is a 521-residue protein sequence, read N- to C-terminus: Endoplasmic reticulum mannosyl-oligosaccharide 1,2-alpha-mannosidase (521 aa).

The Cytoplasmic segment spans residues 1–8 (MVKRRTVK). A helical; Signal-anchor for type II membrane protein membrane pass occupies residues 9-31 (YFLRRILALFVLCVPIYYLYTTV). Residues 32 to 521 (QRPPGYTKLK…IENNMDLYTV (490 aa)) are Lumenal-facing. Asparagine 114, asparagine 167, asparagine 300, asparagine 342, and asparagine 378 each carry an N-linked (GlcNAc...) asparagine glycan. Cysteine 330 and cysteine 373 are disulfide-bonded. Glutamate 387 acts as the Proton donor in catalysis. A glycan (N-linked (GlcNAc...) asparagine) is linked at asparagine 499. Threonine 504 is a binding site for Ca(2+).

It belongs to the glycosyl hydrolase 47 family. Ca(2+) serves as cofactor.

It localises to the membrane. It catalyses the reaction N(4)-(alpha-D-Man-(1-&gt;2)-alpha-D-Man-(1-&gt;2)-alpha-D-Man-(1-&gt;3)-[alpha-D-Man-(1-&gt;2)-alpha-D-Man-(1-&gt;3)-[alpha-D-Man-(1-&gt;2)-alpha-D-Man-(1-&gt;6)]-alpha-D-Man-(1-&gt;6)]-beta-D-Man-(1-&gt;4)-beta-D-GlcNAc-(1-&gt;4)-beta-D-GlcNAc)-L-asparaginyl-[protein] (N-glucan mannose isomer 9A1,2,3B1,2,3) + 4 H2O = N(4)-(alpha-D-Man-(1-&gt;3)-[alpha-D-Man-(1-&gt;3)-[alpha-D-Man-(1-&gt;6)]-alpha-D-Man-(1-&gt;6)]-beta-D-Man-(1-&gt;4)-beta-D-GlcNAc-(1-&gt;4)-beta-D-GlcNAc)-L-asparaginyl-[protein] (N-glucan mannose isomer 5A1,2) + 4 beta-D-mannose. The enzyme catalyses N(4)-(alpha-D-Man-(1-&gt;2)-alpha-D-Man-(1-&gt;2)-alpha-D-Man-(1-&gt;3)-[alpha-D-Man-(1-&gt;3)-[alpha-D-Man-(1-&gt;2)-alpha-D-Man-(1-&gt;6)]-alpha-D-Man-(1-&gt;6)]-beta-D-Man-(1-&gt;4)-beta-D-GlcNAc-(1-&gt;4)-beta-D-GlcNAc)-L-asparaginyl-[protein] (N-glucan mannose isomer 8A1,2,3B1,3) + 3 H2O = N(4)-(alpha-D-Man-(1-&gt;3)-[alpha-D-Man-(1-&gt;3)-[alpha-D-Man-(1-&gt;6)]-alpha-D-Man-(1-&gt;6)]-beta-D-Man-(1-&gt;4)-beta-D-GlcNAc-(1-&gt;4)-beta-D-GlcNAc)-L-asparaginyl-[protein] (N-glucan mannose isomer 5A1,2) + 3 beta-D-mannose. Its pathway is protein modification; protein glycosylation. With respect to regulation, inhibited by kifunensine. Its function is as follows. Involved in glycoprotein quality control as it is important for the targeting of misfolded glycoproteins for degradation. It trims a single alpha-1,2-linked mannose residue from Man(9)GlcNAc(2) to produce Man(8)GlcNAc(2) with low efficiency. The protein is Endoplasmic reticulum mannosyl-oligosaccharide 1,2-alpha-mannosidase of Schizosaccharomyces pombe (strain 972 / ATCC 24843) (Fission yeast).